A 602-amino-acid chain; its full sequence is Fructan 1-exohydrolase (602 aa).

An N-terminal signal peptide occupies residues 1 to 19; it reads MAQAWAFLLLPVLLLSSYA. Residue Asp81 is part of the active site. N-linked (GlcNAc...) asparagine glycans are attached at residues Asn174, Asn242, and Asn254. Cys452 and Cys498 form a disulfide bridge.

Belongs to the glycosyl hydrolase 32 family. Detected in leaves, with maximum levels at the leaf tip.

It catalyses the reaction Hydrolysis of terminal, non-reducing (2-&gt;1)-linked beta-D-fructofuranose residues in fructans.. With respect to regulation, inhibited by sucrose. Its function is as follows. Hydrolyzes inulin-type beta-(2,1)-fructans. Has low activity against beta-(2,6)-linked fructans. May play a role as a beta-(2,1)-trimmer during graminan biosynthesis. The sequence is that of Fructan 1-exohydrolase from Bromus pictus (Patagonian grass).